The primary structure comprises 196 residues: Calcineurin B homologous protein 2 (196 aa).

Residue G2 is the site of N-myristoyl glycine attachment. EF-hand domains follow at residues 26–61, 71–106, 111–146, and 152–187; these read ASLL…AVNP, FPDG…PKKP, SRRN…MVGV, and QLEN…MDVE. A Phosphoserine modification is found at S27. Residues D124, D126, D128, K130, and E135 each coordinate Ca(2+). Positions 137-148 match the Nuclear export signal motif; it reads LQVLRLMVGVQV. Ca(2+) is bound by residues D165, D167, D169, and E176.

This sequence belongs to the calcineurin regulatory subunit family. CHP subfamily. As to quaternary structure, interacts with PPP3CA. Interacts with SLC9A1/NHE1; the interaction occurs in a calcium-dependent manner. As to expression, expressed in malignantly transformed cells but not detected in normal tissues.

Its subcellular location is the nucleus. It localises to the cytoplasm. The protein localises to the cell membrane. Functions as an integral cofactor in cell pH regulation by controlling plasma membrane-type Na(+)/H(+) exchange activity. Binds to and activates SLC9A1/NHE1 in a serum-independent manner, thus increasing pH and protecting cells from serum deprivation-induced death. Also plays a role in the regulation of cell proliferation and tumor growth by increasing the phosphatase activity of PPP3CA in a calcium-dependent manner. Activator of the calcineurin/NFAT signaling pathway. Involved in the cytoplasmic translocation of the transcription factor NFATC3 to the nucleus. The protein is Calcineurin B homologous protein 2 (CHP2) of Homo sapiens (Human).